We begin with the raw amino-acid sequence, 120 residues long: Flagellar protein FliT (120 aa).

A required for homodimerization region spans residues 1 to 50; the sequence is MNDSSLSLKKWHALSALSNTMLSLAQSGKWDELIEQEVAYVSLVEKISIT. Positions 59–97 are fliD binding; the sequence is IQDQAMVMLNNVLQNEMTLKTLLQERMDELHGLMAQTGK.

The protein belongs to the FliT family. As to quaternary structure, homodimer. Interacts with FliD and FlhC.

Its subcellular location is the cytoplasm. It is found in the cytosol. Functionally, dual-function protein that regulates the transcription of class 2 flagellar operons and that also acts as an export chaperone for the filament-capping protein FliD. As a transcriptional regulator, acts as an anti-FlhDC factor; it directly binds FlhC, thus inhibiting the binding of the FlhC/FlhD complex to class 2 promoters, resulting in decreased expression of class 2 flagellar operons. As a chaperone, effects FliD transition to the membrane by preventing its premature polymerization, and by directing it to the export apparatus. In Enterobacter sp. (strain 638), this protein is Flagellar protein FliT.